A 426-amino-acid chain; its full sequence is Histidine--tRNA ligase (426 aa).

This sequence belongs to the class-II aminoacyl-tRNA synthetase family. As to quaternary structure, homodimer.

The protein resides in the cytoplasm. It carries out the reaction tRNA(His) + L-histidine + ATP = L-histidyl-tRNA(His) + AMP + diphosphate + H(+). In Chlorobium phaeovibrioides (strain DSM 265 / 1930) (Prosthecochloris vibrioformis (strain DSM 265)), this protein is Histidine--tRNA ligase.